Consider the following 159-residue polypeptide: 3-dehydroquinate dehydratase (159 aa).

Tyr22 serves as the catalytic Proton acceptor. Asn73, His79, and Asp86 together coordinate substrate. Residue His99 is the Proton donor of the active site. Residues 100-101 and Arg110 each bind substrate; that span reads IS.

It belongs to the type-II 3-dehydroquinase family. As to quaternary structure, homododecamer.

It catalyses the reaction 3-dehydroquinate = 3-dehydroshikimate + H2O. It functions in the pathway metabolic intermediate biosynthesis; chorismate biosynthesis; chorismate from D-erythrose 4-phosphate and phosphoenolpyruvate: step 3/7. Catalyzes a trans-dehydration via an enolate intermediate. This chain is 3-dehydroquinate dehydratase, found in Campylobacter jejuni subsp. doylei (strain ATCC BAA-1458 / RM4099 / 269.97).